Reading from the N-terminus, the 899-residue chain is Protein suppressor of hairy wing (899 aa).

Disordered regions lie at residues 1 to 33 (MSAQEDALPATPPASSSIKISDGDKPKEKRTGT), 45 to 127 (AAVA…KKMD), and 171 to 206 (AKENGEEFVVSGVDEDDDDDDDDEDEGVVEGGAKRR). Positions 21 to 31 (SDGDKPKEKRT) are enriched in basic and acidic residues. A compositionally biased stretch (low complexity) spans 45 to 55 (AAVASKGASVS). Polar residues-rich tracts occupy residues 67 to 83 (KILNNNNNDEAQTSTKG) and 102 to 111 (RSSAPASSAV). Residues 183-198 (VDEDDDDDDDDEDEGV) show a composition bias toward acidic residues. The segment at 218–240 (HVCGKCYKTFRRVKSLKKHLEFC) adopts a C2H2-type 1; atypical zinc-finger fold. The C2H2-type 2 zinc-finger motif lies at 288 to 311 (INCPDCPKSFKTQTSYERHIFITH). The segment at 318-340 (YPCSICNAKLRSGALLKLHEQQH) adopts a C2H2-type 3; atypical zinc-finger fold. 9 C2H2-type zinc fingers span residues 347–365 (FACKICGKDFMCSYHLKCH), 379–401 (MSCKVCDRVFYRLDNLCAHLKQH), 412–434 (YMCHVCKNCFYSLSTLNIHIRTH), 440–462 (FDCDLCDKKFSALVALKKHRRYH), 468–490 (YTCTVCSQSFAVKEVLNRHMKRH), 496–518 (HKCNECGKSFIQATQLRTHSKTH), 522–544 (YACSLCIQKFKTEKQLERHVKDH), 552–576 (FACTECTRSFRTSALLKEHLDAGDH), and 594–617 (TDCAICDKNFDTTETLRNHIRSVH). 3 disordered regions span residues 646–665 (EQKEQEDDVPARNTSAGSLI), 702–734 (PLEGDKATESTAETDIKAESSKEKPSVSPVVKK), and 865–899 (GDEDQDQDQETDKGKDREADNTDTDTREDAVESEA). Positions 874–899 (ETDKGKDREADNTDTDTREDAVESEA) are enriched in basic and acidic residues.

It localises to the nucleus. Functionally, component of the gypsy chromatin insulator complex which is required for the function of the gypsy chromatin insulator and other endogenous chromatin insulators. Chromatin insulators are regulatory elements which establish independent domains of transcriptional activity within eukaryotic genomes. Insulators have two defining properties; they can block the communication between an enhancer and a promoter when placed between them and can also buffer transgenes from position effect variegation (PEV). Insulators are proposed to structure the chromatin fiber into independent domains of differing transcriptional potential by promoting the formation of distinct chromatin loops. This chromatin looping may involve the formation of insulator bodies, where homotypic interactions between individual subunits of the insulator complex could promote the clustering of widely spaced insulators at the nuclear periphery. Within the gypsy insulator complex, this protein binds specifically to a region of the gypsy element located 3' of the 5' long terminal repeat (LTR), and may also mediate interaction with other endogenous insulators at sites distinct from those recognized by Cp190. Cooperates with pita and cliff to recruit Cp190 and regulate insulator function at the front-ultraabdominal (Fub) boundary. In Drosophila virilis (Fruit fly), this protein is Protein suppressor of hairy wing (su(Hw)).